The primary structure comprises 252 residues: Chitooligosaccharide deacetylase (252 aa).

The Mg(2+) site is built by His-61 and His-125.

This sequence belongs to the YdjC deacetylase family. ChbG subfamily. Homodimer. The cofactor is Mg(2+).

The protein localises to the cytoplasm. It catalyses the reaction N,N'-diacetylchitobiose + H2O = N-acetyl-beta-D-glucosaminyl-(1-&gt;4)-D-glucosamine + acetate. The enzyme catalyses diacetylchitobiose-6'-phosphate + H2O = N'-monoacetylchitobiose-6'-phosphate + acetate. Its pathway is glycan degradation; chitin degradation. In terms of biological role, involved in the degradation of chitin. ChbG is essential for growth on the acetylated chitooligosaccharides chitobiose and chitotriose but is dispensable for growth on cellobiose and chitosan dimer, the deacetylated form of chitobiose. Deacetylation of chitobiose-6-P and chitotriose-6-P is necessary for both the activation of the chb promoter by the regulatory protein ChbR and the hydrolysis of phosphorylated beta-glucosides by the phospho-beta-glucosidase ChbF. Catalyzes the removal of only one acetyl group from chitobiose-6-P to yield monoacetylchitobiose-6-P, the inducer of ChbR and the substrate of ChbF. The chain is Chitooligosaccharide deacetylase from Escherichia coli O6:K15:H31 (strain 536 / UPEC).